We begin with the raw amino-acid sequence, 195 residues long: Shikimate kinase (195 aa).

30–35 (GAGKTA) is a binding site for ATP. Thr-34 is a binding site for Mg(2+). Substrate contacts are provided by Asp-52, Arg-76, and Gly-98. Residue Arg-136 coordinates ATP. Substrate is bound at residue Arg-155.

Belongs to the shikimate kinase family. In terms of assembly, monomer. Mg(2+) is required as a cofactor.

Its subcellular location is the cytoplasm. It carries out the reaction shikimate + ATP = 3-phosphoshikimate + ADP + H(+). It participates in metabolic intermediate biosynthesis; chorismate biosynthesis; chorismate from D-erythrose 4-phosphate and phosphoenolpyruvate: step 5/7. Functionally, catalyzes the specific phosphorylation of the 3-hydroxyl group of shikimic acid using ATP as a cosubstrate. The protein is Shikimate kinase of Ruegeria pomeroyi (strain ATCC 700808 / DSM 15171 / DSS-3) (Silicibacter pomeroyi).